A 158-amino-acid chain; its full sequence is SUMO-conjugating enzyme UBC9 (158 aa).

A UBC core domain is found at 4-157; sequence IALSRLAQER…VRAQAKKFSP (154 aa). Residues 13-18 are interaction with sumo1; it reads RKAWRK. C93 (glycyl thioester intermediate) is an active-site residue.

This sequence belongs to the ubiquitin-conjugating enzyme family. Forms a tight complex with RANGAP1 and RANBP2.

It localises to the nucleus. The protein operates within protein modification; protein sumoylation. Functionally, accepts the ubiquitin-like proteins SUMO1, SUMO2 and SUMO3 from the UBLE1A-UBLE1B E1 complex and catalyzes their covalent attachment to other proteins with the help of an E3 ligase such as RANBP2 or CBX4. Essential for nuclear architecture and chromosome segregation. In Pagrus major (Red sea bream), this protein is SUMO-conjugating enzyme UBC9 (ube2i).